The following is a 215-amino-acid chain: Orotate phosphoribosyltransferase (215 aa).

Lys26 contacts 5-phospho-alpha-D-ribose 1-diphosphate. 34–35 (FF) lines the orotate pocket. 5-phospho-alpha-D-ribose 1-diphosphate is bound by residues 72–73 (YK), Arg99, Lys100, Lys103, His105, and 124–132 (DDVITAGTA). Residues Thr128 and Arg156 each contribute to the orotate site.

Belongs to the purine/pyrimidine phosphoribosyltransferase family. PyrE subfamily. Homodimer. Requires Mg(2+) as cofactor.

The enzyme catalyses orotidine 5'-phosphate + diphosphate = orotate + 5-phospho-alpha-D-ribose 1-diphosphate. It participates in pyrimidine metabolism; UMP biosynthesis via de novo pathway; UMP from orotate: step 1/2. Its function is as follows. Catalyzes the transfer of a ribosyl phosphate group from 5-phosphoribose 1-diphosphate to orotate, leading to the formation of orotidine monophosphate (OMP). In Shewanella oneidensis (strain ATCC 700550 / JCM 31522 / CIP 106686 / LMG 19005 / NCIMB 14063 / MR-1), this protein is Orotate phosphoribosyltransferase.